The sequence spans 564 residues: MRLSQFHLHTTKETPADAELVSHRLMLRAGMIRKLASGLYTWSPLGLRVLRKVEAIVREEMDRAGAVEVLFPTIQPRELWDATGRWEKFGGQLLKIKDRKEQEFCYSPTAEEAAAEFARQEINSYKQLPLNFYQIQTKFRDEIRPRFGVMRAREFLMKDAYSFHLTDADMAREYDNMRAAYTRIFTRLGLDFRAVQADSGAIGGDASQEFHVIADSGEDSLAFSTGSDYAANVETASAALPAPRAAASEAMQQVATPTQKTCEDVAQLLGIALQRTVKSVAVMTEAGFVLALVRGDHAVNEIKLAKVPGLAGYRLANETEIRAHLGCEPGFLGPVNTARPVRVVADRDVAALADFVVGANVSGAHLVGVNWGRDLPEPETVADVRNVVEGERAADGGELRLARGIEVGHVFQLGSQYAQALQATVIDEGGKVAVMKMGCYGIGISRIVAAAIEQNHDDAGIIWPAPMAPWQVVVCVINPKQDAQVVSAAQALLDELIAAGLDAALDDRGLRPGAMFADMELLGIPHRVVVSERGLAAGTFEYRARTAAAAENLDKAGLFSRLGR.

Belongs to the class-II aminoacyl-tRNA synthetase family. ProS type 1 subfamily. Homodimer.

The protein resides in the cytoplasm. The catalysed reaction is tRNA(Pro) + L-proline + ATP = L-prolyl-tRNA(Pro) + AMP + diphosphate. Its function is as follows. Catalyzes the attachment of proline to tRNA(Pro) in a two-step reaction: proline is first activated by ATP to form Pro-AMP and then transferred to the acceptor end of tRNA(Pro). As ProRS can inadvertently accommodate and process non-cognate amino acids such as alanine and cysteine, to avoid such errors it has two additional distinct editing activities against alanine. One activity is designated as 'pretransfer' editing and involves the tRNA(Pro)-independent hydrolysis of activated Ala-AMP. The other activity is designated 'posttransfer' editing and involves deacylation of mischarged Ala-tRNA(Pro). The misacylated Cys-tRNA(Pro) is not edited by ProRS. The polypeptide is Proline--tRNA ligase (Xanthomonas oryzae pv. oryzae (strain KACC10331 / KXO85)).